Reading from the N-terminus, the 241-residue chain is Small ribosomal subunit protein uS3 (241 aa).

The 69-residue stretch at 39-107 folds into the KH type-2 domain; sequence IREVLMKNLK…EVVINIVEVR (69 aa). The tract at residues 219–241 is disordered; sequence MAELDHAGGGGGGERRRRERDAA. Basic and acidic residues predominate over residues 231–241; the sequence is GERRRRERDAA.

This sequence belongs to the universal ribosomal protein uS3 family. In terms of assembly, part of the 30S ribosomal subunit. Forms a tight complex with proteins S10 and S14.

In terms of biological role, binds the lower part of the 30S subunit head. Binds mRNA in the 70S ribosome, positioning it for translation. This is Small ribosomal subunit protein uS3 from Beijerinckia indica subsp. indica (strain ATCC 9039 / DSM 1715 / NCIMB 8712).